The chain runs to 538 residues: Atos homolog protein B (538 aa).

The span at 1–18 (MRHVQAEPSPSSEPEAGP) shows a compositional bias: low complexity. Disordered stretches follow at residues 1–103 (MRHV…GLLG), 153–185 (NTLH…QLHT), 197–300 (GGKS…VLDP), and 323–342 (SLRK…VPTP). Pro residues predominate over residues 227 to 238 (HTPPGPGPPGPC). Phosphoserine is present on residues Ser-254 and Ser-255. The segment covering 323-334 (SLRKGPGLLSPP) has biased composition (low complexity). Residues 348–430 (LLGSFEESLL…VPKVGTIQVT (83 aa)) are required for macropage invasion. The segment at 436–444 (QTVVKMFLV) is transactivation domain 1 (TAD1).

The protein belongs to the ATOS family.

It is found in the nucleus. Transcription regulator that may syncronize transcriptional and translational programs. The sequence is that of Atos homolog protein B from Pongo abelii (Sumatran orangutan).